We begin with the raw amino-acid sequence, 137 residues long: Cytochrome b5 (137 aa).

A Cytochrome b5 heme-binding domain is found at 6–82 (KKVYTLEEVA…MDEYYVGDID (77 aa)). Heme is bound by residues His41 and His65. The helical transmembrane segment at 108–128 (FIIKILQFLVPLAILGLAVAI) threads the bilayer.

Belongs to the cytochrome b5 family.

It is found in the endoplasmic reticulum membrane. The protein localises to the microsome membrane. In terms of biological role, membrane bound hemoprotein which function as an electron carrier for several membrane bound oxygenases. The protein is Cytochrome b5 of Oryza sativa subsp. japonica (Rice).